A 1652-amino-acid chain; its full sequence is Maestro heat-like repeat-containing protein family member 1 (1652 aa).

HEAT repeat units lie at residues 3–41 (ETYA…SKPA), 260–300 (EEQL…VGSR), 344–382 (CCSP…AAAA), 385–423 (EVKK…HGYL), 1369–1407 (LMLL…GSPD), 1410–1448 (QTHS…LMDL), and 1616–1652 (QVDL…VKFA).

The protein belongs to the MROH1 family. Homooligomer; homooligomerizes at lysosome scission sites.

The protein localises to the lysosome membrane. Lysosome fission factor. Recruited to lysosomes by RAB7 (RAB7A or RAB7B) at scission sites and homooligomerizes to mediate the constriction and scission of lysosomal tubules. May sever membranes by inserting amphipathic helices into one bilayer leaflet. Lysosome fission is required to maintain their steady-state number, shape, size, composition and function, and to accomplish regeneration. In Bos taurus (Bovine), this protein is Maestro heat-like repeat-containing protein family member 1 (MROH1).